The primary structure comprises 300 residues: Homoserine kinase (300 aa).

Residue 86–96 (PVARGLGSSAT) coordinates ATP.

The protein belongs to the GHMP kinase family. Homoserine kinase subfamily.

Its subcellular location is the cytoplasm. It catalyses the reaction L-homoserine + ATP = O-phospho-L-homoserine + ADP + H(+). It functions in the pathway amino-acid biosynthesis; L-threonine biosynthesis; L-threonine from L-aspartate: step 4/5. Functionally, catalyzes the ATP-dependent phosphorylation of L-homoserine to L-homoserine phosphate. This is Homoserine kinase from Persephonella marina (strain DSM 14350 / EX-H1).